We begin with the raw amino-acid sequence, 305 residues long: Flavin-dependent thymidylate synthase (305 aa).

Residues 50–261 (GFVRLIDYLG…PCATASFENH (212 aa)) enclose the ThyX domain. Residues serine 96, 119 to 121 (RHR), and glutamate 127 contribute to the FAD site. Residues 116–119 (QWMR), 127–131 (EVSSR), and arginine 200 each bind dUMP. The ThyX motif motif lies at 119-129 (RHRTARISEVS). Residues 216 to 218 (DLH) and histidine 222 contribute to the FAD site. Arginine 227 is a dUMP binding site. The active-site Involved in ionization of N3 of dUMP, leading to its activation is the arginine 227.

The protein belongs to the thymidylate synthase ThyX family. In terms of assembly, homotetramer. Requires FAD as cofactor.

The enzyme catalyses dUMP + (6R)-5,10-methylene-5,6,7,8-tetrahydrofolate + NADPH + H(+) = dTMP + (6S)-5,6,7,8-tetrahydrofolate + NADP(+). Its pathway is pyrimidine metabolism; dTTP biosynthesis. Its function is as follows. Catalyzes the reductive methylation of 2'-deoxyuridine-5'-monophosphate (dUMP) to 2'-deoxythymidine-5'-monophosphate (dTMP) while utilizing 5,10-methylenetetrahydrofolate (mTHF) as the methyl donor, and NADPH and FADH(2) as the reductant. The chain is Flavin-dependent thymidylate synthase from Treponema pallidum (strain Nichols).